The following is a 545-amino-acid chain: CTP synthase (545 aa).

An amidoligase domain region spans residues 1 to 266 (MTTNYIFVTG…DDYICKRFSL (266 aa)). S14 contacts CTP. UTP is bound at residue S14. Residues 15–20 (SLGKGI) and D72 each bind ATP. Residues D72 and E140 each contribute to the Mg(2+) site. CTP-binding positions include 147–149 (DIE), 187–192 (KTKPTQ), and K223. UTP-binding positions include 187 to 192 (KTKPTQ) and K223. 239-241 (KDV) is a binding site for ATP. The Glutamine amidotransferase type-1 domain maps to 291-542 (TIGMVGKYIE…VKAANEHQKR (252 aa)). Position 352 (G352) interacts with L-glutamine. The Nucleophile; for glutamine hydrolysis role is filled by C379. Residues 380–383 (LGMQ), E403, and R470 each bind L-glutamine. Catalysis depends on residues H515 and E517.

This sequence belongs to the CTP synthase family. As to quaternary structure, homotetramer.

It carries out the reaction UTP + L-glutamine + ATP + H2O = CTP + L-glutamate + ADP + phosphate + 2 H(+). The enzyme catalyses L-glutamine + H2O = L-glutamate + NH4(+). The catalysed reaction is UTP + NH4(+) + ATP = CTP + ADP + phosphate + 2 H(+). Its pathway is pyrimidine metabolism; CTP biosynthesis via de novo pathway; CTP from UDP: step 2/2. With respect to regulation, allosterically activated by GTP, when glutamine is the substrate; GTP has no effect on the reaction when ammonia is the substrate. The allosteric effector GTP functions by stabilizing the protein conformation that binds the tetrahedral intermediate(s) formed during glutamine hydrolysis. Inhibited by the product CTP, via allosteric rather than competitive inhibition. Its function is as follows. Catalyzes the ATP-dependent amination of UTP to CTP with either L-glutamine or ammonia as the source of nitrogen. Regulates intracellular CTP levels through interactions with the four ribonucleotide triphosphates. This is CTP synthase from Salmonella newport (strain SL254).